The sequence spans 211 residues: Large ribosomal subunit protein uL3 (211 aa).

Q150 is modified (N5-methylglutamine).

It belongs to the universal ribosomal protein uL3 family. As to quaternary structure, part of the 50S ribosomal subunit. Forms a cluster with proteins L14 and L19. Methylated by PrmB.

One of the primary rRNA binding proteins, it binds directly near the 3'-end of the 23S rRNA, where it nucleates assembly of the 50S subunit. The protein is Large ribosomal subunit protein uL3 of Pseudomonas putida (strain GB-1).